Here is a 270-residue protein sequence, read N- to C-terminus: Phospholysine phosphohistidine inorganic pyrophosphate phosphatase (270 aa).

Mg(2+) contacts are provided by Asp19 and Cys21. Substrate contacts are provided by residues 19 to 21, 56 to 57, and Lys191; these read DMC and TN. Asp216 lines the Mg(2+) pocket.

This sequence belongs to the HAD-like hydrolase superfamily. The cofactor is Mg(2+).

It localises to the cytoplasm. It is found in the nucleus. The catalysed reaction is diphosphate + H2O = 2 phosphate + H(+). In terms of biological role, phosphatase that hydrolyzes imidodiphosphate, 3-phosphohistidine and 6-phospholysine. Has broad substrate specificity and can also hydrolyze inorganic diphosphate, but with lower efficiency. The polypeptide is Phospholysine phosphohistidine inorganic pyrophosphate phosphatase (lhpp) (Danio rerio (Zebrafish)).